Consider the following 141-residue polypeptide: MEQTLSIIKPDSVGKAHIGEIIAIFEKSGLRIAAMKMVHLSVKEAEGFYVVHKERPFFQELVDFMISGPVVVMVLQGENAVARNRELMGATNPKEAAEGSIRALFGESIGVNAVHGSDSLENAAIEVSYFFAKTEIVNSVA.

The ATP site is built by Lys9, Phe57, Arg85, Thr91, Arg102, and Asn112. Catalysis depends on His115, which acts as the Pros-phosphohistidine intermediate.

This sequence belongs to the NDK family. In terms of assembly, homotetramer. The cofactor is Mg(2+).

The protein resides in the cytoplasm. It carries out the reaction a 2'-deoxyribonucleoside 5'-diphosphate + ATP = a 2'-deoxyribonucleoside 5'-triphosphate + ADP. The enzyme catalyses a ribonucleoside 5'-diphosphate + ATP = a ribonucleoside 5'-triphosphate + ADP. Functionally, major role in the synthesis of nucleoside triphosphates other than ATP. The ATP gamma phosphate is transferred to the NDP beta phosphate via a ping-pong mechanism, using a phosphorylated active-site intermediate. In Chlamydia trachomatis serovar A (strain ATCC VR-571B / DSM 19440 / HAR-13), this protein is Nucleoside diphosphate kinase.